Reading from the N-terminus, the 313-residue chain is MKTFLILALVATTATTAVRVPVPQLQPKNPSQQQPQEQVPLVQQQQFPGQQQQFPPQQPYPQPQPFPSQQPYLQLQPFPQPQPFLPQLPYPQPQSFPPQQPYPQQRPKYLQPQQPISQQQAQQQQQQQQQQQQQQQQQILQQILQQQLIPCRDVVLQQHNIAHASSQVLQQSTYQLLQQLCCQQLLQIPEQSRCQAIHNVVHAIIMHQQEQQQQLQQQQQQQLQQQQQQQQQQQQPSSQVSFQQPQQQYPSSQGSFQPSQQNPQAQGSVQPQQLPQFAEIRNLALQTLPAMCNVYIPPHCSTTIAPFGIFGTN.

Positions 1 to 20 (MKTFLILALVATTATTAVRV) are cleaved as a signal peptide. A compositionally biased stretch (low complexity) spans 22 to 55 (VPQLQPKNPSQQQPQEQVPLVQQQQFPGQQQQFP). Disordered stretches follow at residues 22 to 122 (VPQL…QQAQ) and 234 to 272 (QQPS…VQPQ). 2 stretches are compositionally biased toward pro residues: residues 56–68 (PQQP…PFPS) and 78–101 (FPQP…PQQP). Low complexity-rich tracts occupy residues 102-122 (YPQQ…QQAQ) and 234-264 (QQPS…QNPQ).

This sequence belongs to the gliadin/glutenin family. In terms of processing, substrate of transglutaminase.

Its function is as follows. Gliadin is the major seed storage protein in wheat. This is Alpha/beta-gliadin clone PW8142 from Triticum aestivum (Wheat).